An 84-amino-acid chain; its full sequence is UPF0457 protein BALH_2270 (84 aa).

The protein belongs to the UPF0457 family.

This chain is UPF0457 protein BALH_2270, found in Bacillus thuringiensis (strain Al Hakam).